The chain runs to 100 residues: Urease subunit gamma (100 aa).

Belongs to the urease gamma subunit family. As to quaternary structure, heterotrimer of UreA (gamma), UreB (beta) and UreC (alpha) subunits. Three heterotrimers associate to form the active enzyme.

The protein localises to the cytoplasm. It carries out the reaction urea + 2 H2O + H(+) = hydrogencarbonate + 2 NH4(+). It participates in nitrogen metabolism; urea degradation; CO(2) and NH(3) from urea (urease route): step 1/1. This Arthrobacter sp. (strain FB24) protein is Urease subunit gamma.